Here is a 310-residue protein sequence, read N- to C-terminus: 4-diphosphocytidyl-2-C-methyl-D-erythritol kinase (310 aa).

Lys11 is a catalytic residue. 95 to 105 (PIGAGLAGGSA) is a binding site for ATP. The active site involves Asp137.

Belongs to the GHMP kinase family. IspE subfamily.

It catalyses the reaction 4-CDP-2-C-methyl-D-erythritol + ATP = 4-CDP-2-C-methyl-D-erythritol 2-phosphate + ADP + H(+). The protein operates within isoprenoid biosynthesis; isopentenyl diphosphate biosynthesis via DXP pathway; isopentenyl diphosphate from 1-deoxy-D-xylulose 5-phosphate: step 3/6. Functionally, catalyzes the phosphorylation of the position 2 hydroxy group of 4-diphosphocytidyl-2C-methyl-D-erythritol. This is 4-diphosphocytidyl-2-C-methyl-D-erythritol kinase from Acaryochloris marina (strain MBIC 11017).